A 155-amino-acid chain; its full sequence is Putative pre-16S rRNA nuclease (155 aa).

Belongs to the YqgF nuclease family.

It localises to the cytoplasm. Functionally, could be a nuclease involved in processing of the 5'-end of pre-16S rRNA. The chain is Putative pre-16S rRNA nuclease from Xanthomonas campestris pv. campestris (strain B100).